The chain runs to 310 residues: M1-specific T cell receptor beta chain (310 aa).

The first 21 residues, 1 to 21 (MSNQVLCCVVLCLLGANTVDG), serve as a signal peptide directing secretion. The segment at 22–114 (GITQSPKYLF…TAFYLCASSI (93 aa)) is t cell receptor beta variable 19. An Ig-like V-type domain is found at 34-131 (EGQNVTLSCE…FGPGTRLTVT (98 aa)). The N-linked (GlcNAc...) asparagine glycan is linked to Asn-37. Cysteines 42 and 110 form a disulfide. The CDR1 stretch occupies residues 46 to 50 (LNHDA). Asp-49 is a binding site for a peptide antigen. The interval 68–73 (SQIVND) is CDR2. The tract at residues 110-122 (CASSIRSSYEQYF) is CDR3. Residues 117–131 (SYEQYFGPGTRLTVT) are t cell receptor beta joining 2-7. Residues 133–310 (DLKNVFPPKV…AMVKRKDSRG (178 aa)) form a t cell receptor beta constant 2 region. The 110-residue stretch at 140–249 (PKVAVFEPSE…WTQDRAKPVT (110 aa)) folds into the Ig-like C1-type domain. Cys-162 and Cys-227 are oxidised to a cystine. An N-linked (GlcNAc...) asparagine glycan is attached at Asn-201. Residues 262 to 276 (CGFTSESYQQGVLSA) form a connecting peptide region. A helical transmembrane segment spans residues 277–299 (TILYEILLGKATLYAVLVSALVL). Residues 300 to 310 (MAMVKRKDSRG) lie on the Cytoplasmic side of the membrane.

In terms of assembly, disulfide-linked heterodimer with TRAV27*01J42*01C*01 alpha chain. The TR primarily interacts via its CDR3-beta domain with M/matrix protein 1-derived peptide (GILGFVFTL) displayed by HLA-A*02.01 in a 'peg-notch' recognition mode. The alpha-beta TR associates with the transmembrane signaling CD3 coreceptor proteins to form the TR-CD3 (TCR). The assembly of alpha-beta TR heterodimers with CD3 occurs in the endoplasmic reticulum where a single alpha-beta TR heterodimer associates with one CD3D-CD3E heterodimer, one CD3G-CD3E heterodimer and one CD247 homodimer forming a stable octameric structure. CD3D-CD3E and CD3G-CD3E heterodimers preferentially associate with TR alpha and TR beta chains (via TM domain), respectively. The association of the CD247 homodimer is the last step of TCR assembly in the endoplasmic reticulum and is required for transport to the cell surface. As to expression, expressed in M/matrix protein 1-specific effector memory CD8-positive T cells readily detectable in the peripheral blood, secondary lymphoid organs and lung (primary site of infection) of IAV infected individuals.

It is found in the cell membrane. Its function is as follows. The beta chain of TRAV27*01J42*01C*01/TRBV19*01J2S7*01C*02 alpha-beta T cell receptor (TR) clonotype that is specific for HLA-A*02:01-restricted M/matrix protein 1 immunodominant epitope GILGFVFTL of influenza A virus (IAV). Classified as a public TCR clonotype, it is preferentially selected in effector memory CD8-positive T cells among multiple HLA-A*02:01 carriers/individuals and confers long-lived immunity against IAV infection. Can cross-recognize sporadically emerging IAV variants by molecular mimicry, inducing immunity toward different influenza strains. Antigen recognition initiates TR-CD3 clustering on the cell surface and intracellular activation of LCK that phosphorylates the ITAM motifs of CD3G, CD3D, CD3E and CD247 enabling the recruitment of ZAP70. In turn, ZAP70 phosphorylates LAT, which recruits numerous signaling molecules to form the LAT signalosome. The LAT signalosome propagates signal branching to three major signaling pathways, the calcium, the mitogen-activated protein kinase (MAPK) kinase and the nuclear factor NF-kappa-B (NF-kB) pathways, leading to the mobilization of transcription factors that are critical for gene expression and essential for T cell differentiation into effector/memory T cells. The polypeptide is M1-specific T cell receptor beta chain (Homo sapiens (Human)).